Here is a 279-residue protein sequence, read N- to C-terminus: Movement protein (279 aa).

The disordered stretch occupies residues 246–279; it reads SESEELNVESPPAAIGSSSASRSEAFRPQVVNGL. The segment covering 254-268 has biased composition (low complexity); the sequence is ESPPAAIGSSSASRS.

The protein belongs to the cucumovirus movement protein family.

The protein localises to the host cell junction. Its subcellular location is the host plasmodesma. Functionally, transports viral genome to neighboring plant cells directly through plasmosdesmata, without any budding. The movement protein allows efficient cell to cell propagation, by bypassing the host cell wall barrier. Acts by forming a tubular structure at the host plasmodesmata, enlarging it enough to allow free passage of virion capsids. The polypeptide is Movement protein (Cucumber mosaic virus (strain CS) (CMV)).